Consider the following 267-residue polypeptide: Large ribosomal subunit protein uL2c (267 aa).

This sequence belongs to the universal ribosomal protein uL2 family. In terms of assembly, part of the 50S ribosomal subunit.

It is found in the plastid. It localises to the apicoplast. This chain is Large ribosomal subunit protein uL2c (rpl2), found in Toxoplasma gondii.